A 99-amino-acid chain; its full sequence is Small ribosomal subunit protein uS17 (99 aa).

This sequence belongs to the universal ribosomal protein uS17 family. Part of the 30S ribosomal subunit.

In terms of biological role, one of the primary rRNA binding proteins, it binds specifically to the 5'-end of 16S ribosomal RNA. In Thermosipho africanus (strain TCF52B), this protein is Small ribosomal subunit protein uS17.